The following is a 311-amino-acid chain: Salutaridine reductase (311 aa).

NADP(+)-binding positions include 21–24 (NKGI), R44, 70–71 (DV), and N98. Residues Y129 and S180 each contribute to the substrate site. Residues Y236, K240, and 267-272 (VKTEMN) contribute to the NADP(+) site. Y236 serves as the catalytic Proton acceptor. Residues C263 and C305 are joined by a disulfide bond.

Belongs to the short-chain dehydrogenases/reductases (SDR) family.

The enzyme catalyses (7S)-salutaridinol + NADP(+) = salutaridine + NADPH + H(+). Its pathway is alkaloid biosynthesis; morphine biosynthesis. Strong substrate inhibition. Was thought to be due to mutually exclusive productive and non-productive modes of substrate binding in the active site. Alternatively, SALR may undergo significant conformational changes during catalytic turnover. Its function is as follows. Short-chain dehydrogenases/reductases involved in biosynthesis of morphinan-type benzylisoquinoline and opiate alkaloids natural products. Catalyzes specifically the stereospecific conversion of salutaridine to salutaridinol. This Papaver somniferum (Opium poppy) protein is Salutaridine reductase.